Consider the following 189-residue polypeptide: Putative biopolymer transport protein ExbB-like 1 (189 aa).

3 helical membrane-spanning segments follow: residues 14–34, 99–119, and 147–167; these read FVTT…LWVF, LVVL…GTVV, and LIAT…YLIL.

The protein belongs to the ExbB/TolQ family.

The protein localises to the cell inner membrane. This Helicobacter pylori (strain ATCC 700392 / 26695) (Campylobacter pylori) protein is Putative biopolymer transport protein ExbB-like 1.